Consider the following 845-residue polypeptide: Protein translocase subunit SecA 1 (845 aa).

Residues Q85, 103–107, and D492 contribute to the ATP site; that span reads GEGKT.

The protein belongs to the SecA family. Monomer and homodimer. Part of the essential Sec protein translocation apparatus which comprises SecA, SecYEG and auxiliary proteins SecDF. Other proteins may also be involved.

The protein resides in the cell membrane. Its subcellular location is the cytoplasm. It carries out the reaction ATP + H2O + cellular proteinSide 1 = ADP + phosphate + cellular proteinSide 2.. Functionally, part of the Sec protein translocase complex. Interacts with the SecYEG preprotein conducting channel. Has a central role in coupling the hydrolysis of ATP to the transfer of proteins into and across the cell membrane, serving as an ATP-driven molecular motor driving the stepwise translocation of polypeptide chains across the membrane. In Corynebacterium glutamicum (strain ATCC 13032 / DSM 20300 / JCM 1318 / BCRC 11384 / CCUG 27702 / LMG 3730 / NBRC 12168 / NCIMB 10025 / NRRL B-2784 / 534), this protein is Protein translocase subunit SecA 1.